Consider the following 380-residue polypeptide: Glucose-1-phosphate adenylyltransferase (380 aa).

Residues G164, 179–180, and S190 contribute to the alpha-D-glucose 1-phosphate site; that span reads EK.

This sequence belongs to the bacterial/plant glucose-1-phosphate adenylyltransferase family. In terms of assembly, homotetramer.

The enzyme catalyses alpha-D-glucose 1-phosphate + ATP + H(+) = ADP-alpha-D-glucose + diphosphate. Its pathway is glycan biosynthesis; glycogen biosynthesis. Functionally, involved in the biosynthesis of ADP-glucose, a building block required for the elongation reactions to produce glycogen. Catalyzes the reaction between ATP and alpha-D-glucose 1-phosphate (G1P) to produce pyrophosphate and ADP-Glc. The sequence is that of Glucose-1-phosphate adenylyltransferase from Streptococcus pneumoniae (strain 70585).